We begin with the raw amino-acid sequence, 215 residues long: Eukaryotic translation initiation factor 4E (215 aa).

Residues 1–27 (MAERDSEPRVNIIRPDDEPEVEEERVP) form a disordered region. Position 207 is a phosphoserine; by PKC (Ser-207).

This sequence belongs to the eukaryotic initiation factor 4E family. As to quaternary structure, eIF4F is a multi-subunit complex, the composition of which varies with external and internal environmental conditions. It is composed of at least eIF4A, eIF4E and eIF4G. eIF4E is also known to interact with other partners. Post-translationally, phosphorylation increases the ability of the protein to bind to mRNA caps and to form the eIF4F complex.

Functionally, recognizes and binds the 7-methylguanosine-containing mRNA cap during an early step in the initiation of protein synthesis and facilitates ribosome binding by inducing the unwinding of the mRNAs secondary structures. This is Eukaryotic translation initiation factor 4E from Aplysia californica (California sea hare).